A 698-amino-acid polypeptide reads, in one-letter code: Protein arginine N-methyltransferase 7 (698 aa).

2 consecutive SAM-dependent MTase PRMT-type domains span residues 14 to 357 (QNTW…YSLW) and 366 to 698 (EKPA…EKSE).

It belongs to the class I-like SAM-binding methyltransferase superfamily. Protein arginine N-methyltransferase family. PRMT7 subfamily.

Functionally, essential arginine methyltransferase that can both catalyze the formation of omega-N monomethylarginine (MMA) and symmetrical dimethylarginine (sDMA). Specifically mediates the symmetrical dimethylation of arginine residues in the small nuclear ribonucleoproteins SmD1 and SmD3. This Drosophila mojavensis (Fruit fly) protein is Protein arginine N-methyltransferase 7 (Art7).